We begin with the raw amino-acid sequence, 147 residues long: Endoribonuclease YbeY (147 aa).

The Zn(2+) site is built by His-107, His-111, and His-117.

It belongs to the endoribonuclease YbeY family. The cofactor is Zn(2+).

The protein resides in the cytoplasm. Its function is as follows. Single strand-specific metallo-endoribonuclease involved in late-stage 70S ribosome quality control and in maturation of the 3' terminus of the 16S rRNA. The protein is Endoribonuclease YbeY of Solibacter usitatus (strain Ellin6076).